We begin with the raw amino-acid sequence, 976 residues long: Leucine--tRNA ligase (976 aa).

The segment covering 1-23 (MTESPTTTPGSTSGAPSGVPSGV) has biased composition (low complexity). Residues 1 to 34 (MTESPTTTPGSTSGAPSGVPSGVNDAESDAPRHR) form a disordered region. Residues 86 to 97 (PYPSGEGLHVGH) carry the 'HIGH' region motif. The 'KMSKS' region signature appears at 745–749 (KIGKS). An ATP-binding site is contributed by Lys-748.

Belongs to the class-I aminoacyl-tRNA synthetase family.

The protein resides in the cytoplasm. It catalyses the reaction tRNA(Leu) + L-leucine + ATP = L-leucyl-tRNA(Leu) + AMP + diphosphate. This chain is Leucine--tRNA ligase, found in Mycobacterium ulcerans (strain Agy99).